Reading from the N-terminus, the 185-residue chain is Ribosome-recycling factor (185 aa).

Belongs to the RRF family.

It localises to the cytoplasm. Functionally, responsible for the release of ribosomes from messenger RNA at the termination of protein biosynthesis. May increase the efficiency of translation by recycling ribosomes from one round of translation to another. The chain is Ribosome-recycling factor from Saccharopolyspora erythraea (strain ATCC 11635 / DSM 40517 / JCM 4748 / NBRC 13426 / NCIMB 8594 / NRRL 2338).